A 485-amino-acid chain; its full sequence is Proline--tRNA ligase (485 aa).

It belongs to the class-II aminoacyl-tRNA synthetase family. ProS type 3 subfamily. As to quaternary structure, homodimer.

It localises to the cytoplasm. The catalysed reaction is tRNA(Pro) + L-proline + ATP = L-prolyl-tRNA(Pro) + AMP + diphosphate. Functionally, catalyzes the attachment of proline to tRNA(Pro) in a two-step reaction: proline is first activated by ATP to form Pro-AMP and then transferred to the acceptor end of tRNA(Pro). The sequence is that of Proline--tRNA ligase from Methanopyrus kandleri (strain AV19 / DSM 6324 / JCM 9639 / NBRC 100938).